An 877-amino-acid chain; its full sequence is Lipophilic envelope-spanning tunnel protein B (877 aa).

The Cytoplasmic portion of the chain corresponds to 1-19 (MSQETPASTTEAQIKNKRR). A helical membrane pass occupies residues 20–40 (ISPFWLLPFIALMIASWLIWD). The Periplasmic portion of the chain corresponds to 41-877 (SYQDRGNTVT…WREWGTALPK (837 aa)). MCE/MlaD stretches follow at residues 46-149 (GNTV…VALD), 160-272 (DLMI…GLYE), 279-382 (RGVI…VVPG), 391-499 (DVLT…PLYA), 515-625 (TTVS…ILYA), 634-737 (GGQI…LQEA), and 746-862 (DGLS…LLQE).

The protein belongs to the PqiB family. As to quaternary structure, homohexamer. May interact with LetA in the inner membrane. May also interact with partners in the outer membrane.

The protein resides in the cell inner membrane. Its function is as follows. Forms a tunnel that spans the entire periplasmic space. Is probably involved in the transport of lipids between the inner membrane and the outer membrane through the tunnel. Forms a dynamic tunnel sufficiently long to mediate lipid transport directly between the two membranes without the need for a shuttle protein. Binds phospholipids. Lipids bind inside the tunnel. Required for outer membrane homeostasis. Contributes to membrane integrity. This is Lipophilic envelope-spanning tunnel protein B from Escherichia coli (strain K12).